The sequence spans 94 residues: Small ribosomal subunit protein uS17 (94 aa).

This sequence belongs to the universal ribosomal protein uS17 family. Part of the 30S ribosomal subunit.

Functionally, one of the primary rRNA binding proteins, it binds specifically to the 5'-end of 16S ribosomal RNA. This Symbiobacterium thermophilum (strain DSM 24528 / JCM 14929 / IAM 14863 / T) protein is Small ribosomal subunit protein uS17.